The following is a 529-amino-acid chain: AAA ATPase forming ring-shaped complexes (529 aa).

Residues 15-62 (MERQDERLRSLSEANDRLMAKNHALAKALTRATQELTKAKAQLNQLAG) are a coiled coil. Residue 253–258 (GNGKTL) coordinates ATP.

It belongs to the AAA ATPase family. In terms of assembly, homohexamer. Assembles into a hexameric ring structure.

The chain is AAA ATPase forming ring-shaped complexes from Bifidobacterium dentium (strain ATCC 27534 / DSM 20436 / JCM 1195 / Bd1).